We begin with the raw amino-acid sequence, 429 residues long: tRNA threonylcarbamoyladenosine dehydratase 1 (429 aa).

The next 2 membrane-spanning stretches (helical) occupy residues asparagine 3–alanine 23 and glutamate 74–isoleucine 94. Serine 259 bears the Phosphoserine mark. A helical transmembrane segment spans residues leucine 279 to threonine 299.

Belongs to the HesA/MoeB/ThiF family.

Its subcellular location is the mitochondrion outer membrane. Its function is as follows. Catalyzes the ATP-dependent dehydration of threonylcarbamoyladenosine at position 37 (t(6)A37) to form cyclic t(6)A37 (ct(6)A37) in tRNAs that read codons beginning with adenine. The sequence is that of tRNA threonylcarbamoyladenosine dehydratase 1 (TCD1) from Saccharomyces cerevisiae (strain ATCC 204508 / S288c) (Baker's yeast).